The following is a 393-amino-acid chain: D-alanyl-D-alanine carboxypeptidase DacA (393 aa).

A signal peptide spans 1–18; the sequence is MLKRTTKIAFLSSFVALS. The active-site Acyl-ester intermediate is the Ser65. The active-site Proton acceptor is Lys68. Ser128 is a catalytic residue. Residue Lys231 participates in substrate binding.

The protein belongs to the peptidase S11 family.

It is found in the cell inner membrane. It carries out the reaction Preferential cleavage: (Ac)2-L-Lys-D-Ala-|-D-Ala. Also transpeptidation of peptidyl-alanyl moieties that are N-acyl substituents of D-alanine.. It functions in the pathway cell wall biogenesis; peptidoglycan biosynthesis. Functionally, removes C-terminal D-alanyl residues from sugar-peptide cell wall precursors. This is D-alanyl-D-alanine carboxypeptidase DacA (dacA) from Haemophilus influenzae (strain ATCC 51907 / DSM 11121 / KW20 / Rd).